The following is a 268-amino-acid chain: Shikimate dehydrogenase (NADP(+)) (268 aa).

Shikimate-binding positions include 13–15 and threonine 60; that span reads SLS. Residue lysine 64 is the Proton acceptor of the active site. NADP(+) is bound at residue glutamate 76. Residues asparagine 85 and aspartate 100 each contribute to the shikimate site. NADP(+) contacts are provided by residues 124-128, 148-153, and isoleucine 209; these read GAGGA and NRTMAR. Residue tyrosine 211 participates in shikimate binding. Residue glycine 232 coordinates NADP(+).

This sequence belongs to the shikimate dehydrogenase family. As to quaternary structure, homodimer.

The enzyme catalyses shikimate + NADP(+) = 3-dehydroshikimate + NADPH + H(+). It functions in the pathway metabolic intermediate biosynthesis; chorismate biosynthesis; chorismate from D-erythrose 4-phosphate and phosphoenolpyruvate: step 4/7. Functionally, involved in the biosynthesis of the chorismate, which leads to the biosynthesis of aromatic amino acids. Catalyzes the reversible NADPH linked reduction of 3-dehydroshikimate (DHSA) to yield shikimate (SA). This Staphylococcus aureus (strain JH1) protein is Shikimate dehydrogenase (NADP(+)).